The primary structure comprises 327 residues: Clavesin-2 (327 aa).

The region spanning 96-257 (IKQALKDGFP…EFGGMLPPYD (162 aa)) is the CRAL-TRIO domain. Residues 287–327 (EVEKELSPKSMKRSQSVVDPTVLKRMDKNEEENMQPLLSLD) are disordered. Residue Ser325 is modified to Phosphoserine.

In terms of assembly, forms a complex with clathrin heavy chain and gamma-adaptin.

The protein resides in the golgi apparatus. The protein localises to the trans-Golgi network membrane. It localises to the cytoplasmic vesicle. It is found in the clathrin-coated vesicle. Its subcellular location is the early endosome membrane. In terms of biological role, required for normal morphology of late endosomes and/or lysosomes in neurons. Binds phosphatidylinositol 3,5-bisphosphate (PtdIns(3,5)P2). In Homo sapiens (Human), this protein is Clavesin-2 (CLVS2).